The following is a 256-amino-acid chain: MEMKKRINLELRNQAPEEVTELVLDNCKSSNGEIEGLNDSFKELEFLSMANVQLTSLAKLPTLSKLRKLELSDNIISGGLEVLAERCPNLTYLNLSGNKIKDLGTVEALQNLKNLKSLDLFNCEITNLEDYRDSIFDLLQQITYLDGFDQEDNEAPDSEDDDDEGDEDDNDEDEDEAGPPGEYEEEDDEDDGGSDLGEGEEEEEVGLSYLMKEEIQDEDDDDDYVEEGGDEEEEAEGIRGEKRKRDPEDEGEEEDD.

LRR repeat units lie at residues 43–64 (ELEF…PTLS), 65–87 (KLRK…AERC), and 89–110 (NLTY…EALQ). Positions 123–161 (CEITNLEDYRDSIFDLLQQITYLDGFDQEDNEAPDSEDD) constitute an LRRCT domain. Positions 147 to 256 (GFDQEDNEAP…PEDEGEEEDD (110 aa)) are disordered. Acidic residues-rich tracts occupy residues 148-205 (FDQE…EEEV) and 215-235 (IQDE…EEEA). Positions 204-256 (EVGLSYLMKEEIQDEDDDDDYVEEGGDEEEEAEGIRGEKRKRDPEDEGEEEDD) are ZID domain. Basic and acidic residues predominate over residues 236–247 (EGIRGEKRKRDP).

This sequence belongs to the ANP32 family. In terms of assembly, component of a SWR1-like complex. Interacts with H2A.Z/H2AZ1.

Its subcellular location is the cytoplasm. It is found in the nucleus. Functionally, histone chaperone that specifically mediates the genome-wide removal of histone H2A.Z/H2AZ1 from the nucleosome: removes H2A.Z/H2AZ1 from its normal sites of deposition, especially from enhancer and insulator regions. Not involved in deposition of H2A.Z/H2AZ1 in the nucleosome. May stabilize the evicted H2A.Z/H2AZ1-H2B dimer, thus shifting the equilibrium towards dissociation and the off-chromatin state. Inhibits activity of protein phosphatase 2A (PP2A). Does not inhibit protein phosphatase 1. May play a role in cerebellar development and synaptogenesis. The polypeptide is Acidic leucine-rich nuclear phosphoprotein 32 family member E (ANP32E) (Gallus gallus (Chicken)).